Reading from the N-terminus, the 358-residue chain is Vascular endothelial growth factor D (358 aa).

An N-terminal signal peptide occupies residues 1–21 (MYGEWGMGNILMMFHVYLVQG). Positions 22–93 (FRSEHGPVKD…SRSASHRSTR (72 aa)) are excised as a propeptide. 3 disulfides stabilise this stretch: Cys-116/Cys-158, Cys-147/Cys-194, and Cys-151/Cys-196. 2 N-linked (GlcNAc...) asparagine glycosylation sites follow: Asn-160 and Asn-190. A propeptide spanning residues 211–358 (SIQTPEEDEC…AQGLYSQENP (148 aa)) is cleaved from the precursor. The 1; approximate repeat unit spans residues 227–242 (CPIDMLWDNTKCKCVL). Positions 227 to 323 (CPIDMLWDNT…PDTCSCEDRC (97 aa)) are 4 X 16 AA repeats of C-X(10)-C-X-C-X(1,3)-C. 3 consecutive repeat copies span residues 263 to 278 (CGPH…ECVC), 282 to 298 (CPGD…CFEC), and 306 to 323 (CQKH…EDRC). The N-linked (GlcNAc...) asparagine glycan is linked to Asn-292.

Belongs to the PDGF/VEGF growth factor family. As to quaternary structure, homodimer; non-covalent and antiparallel. In terms of processing, undergoes a complex proteolytic maturation which generates a variety of processed secreted forms with increased activity toward VEGFR-3 and VEGFR-2. VEGF-D first form an antiparallel homodimer linked by disulfide bonds before secretion. The fully processed VEGF-D is composed mostly of two VEGF homology domains (VHDs) bound by non-covalent interactions. Highly expressed in fetal and adult lung.

It is found in the secreted. Its function is as follows. Growth factor active in angiogenesis, lymphangiogenesis and endothelial cell growth, stimulating their proliferation and migration and also has effects on the permeability of blood vessels. May function in the formation of the venous and lymphatic vascular systems during embryogenesis, and also in the maintenance of differentiated lymphatic endothelium in adults. Binds and activates VEGFR-3 (Flt4) receptor. This is Vascular endothelial growth factor D from Mus musculus (Mouse).